The sequence spans 892 residues: Nitrogen assimilation transcription factor nirA (892 aa).

The interval 1-32 (MGEKLDPELSSDGPHTKSSSKGQGTSTDNAPA) is disordered. Residues 16 to 27 (TKSSSKGQGTST) are compositionally biased toward low complexity. Residues 42-70 (CIACRRRKSKCDGNLPSCAACSSVYHTTC) constitute a DNA-binding region (zn(2)-C6 fungal-type). Disordered stretches follow at residues 646–714 (GPWD…SGPV), 731–761 (AHNE…SAQE), and 842–892 (PNIP…SFQR). Over residues 649–674 (DQAASPSTTSDSPPSVSSQSVVATTD) the composition is skewed to low complexity. Composition is skewed to polar residues over residues 675–714 (LSQP…SGPV), 746–761 (VSTS…SAQE), and 876–892 (NVNS…SFQR).

It is found in the nucleus. Its function is as follows. Pathway-specific regulatory gene of nitrate assimilation; it activates the transcription of the genes for nitrate and nitrite reductases (niaD and niiA). This Emericella nidulans (strain FGSC A4 / ATCC 38163 / CBS 112.46 / NRRL 194 / M139) (Aspergillus nidulans) protein is Nitrogen assimilation transcription factor nirA (nirA).